We begin with the raw amino-acid sequence, 41 residues long: Large ribosomal subunit protein bL36 (41 aa).

Belongs to the bacterial ribosomal protein bL36 family.

This Phenylobacterium zucineum (strain HLK1) protein is Large ribosomal subunit protein bL36.